Consider the following 246-residue polypeptide: 4-aminobenzoate synthase (246 aa).

Fe(2+) is bound by residues glutamate 88, histidine 95, glutamate 149, histidine 181, aspartate 185, and histidine 188.

This sequence belongs to the CADD family. As to quaternary structure, homodimer. Requires Fe(2+) as cofactor. Mn(2+) serves as cofactor.

Its function is as follows. Involved in de novo para-aminobenzoate (PABA) biosynthesis. Acts as a self-sacrificing or 'suicide' enzyme that utilizes its own active site tyrosine residue(s) as the substrate for PABA synthesis. The side chain of the tyrosine residue is released from the protein backbone via cleavage of the C(alpha)-C(beta) bond, leaving a glycine in place of the original tyrosine residue. Reaction requires O(2) and a reduced dimetal cofactor. This chain is 4-aminobenzoate synthase, found in Nitrosomonas europaea (strain ATCC 19718 / CIP 103999 / KCTC 2705 / NBRC 14298).